We begin with the raw amino-acid sequence, 336 residues long: Ornithine carbamoyltransferase, catabolic (336 aa).

Carbamoyl phosphate is bound by residues 57–60 (STRT), Gln-84, Arg-108, and 135–138 (HPTQ). L-ornithine is bound by residues Asn-168, Asp-232, and 236 to 237 (SM). Carbamoyl phosphate-binding positions include 274-275 (CL) and Arg-321.

Belongs to the aspartate/ornithine carbamoyltransferase superfamily. OTCase family. Nonameric or dodecamer (tetramer of trimers).

The protein resides in the cytoplasm. The enzyme catalyses carbamoyl phosphate + L-ornithine = L-citrulline + phosphate + H(+). It functions in the pathway amino-acid degradation; L-arginine degradation via ADI pathway; carbamoyl phosphate from L-arginine: step 2/2. With respect to regulation, inhibited by 2-aminopentanoic acid (norvaline). Activated by phosphate and nucleoside monophosphates such as AMP, GMP, CMP, UMP. Allosterically inhibited by the polyamines such as spermidine and putrescine. Functionally, involved in the catabolism of arginine. Catalyzes the phosphorolysis of citrulline, the reverse reaction of the biosynthetic one, yielding ornithine and carbamoyl phosphate which serve to generate ATP from ADP. This catabolic OTCase does not carry out the biosynthetic reaction because of a poor affinity and a marked cooperativity for carbamoyl phosphate. This chain is Ornithine carbamoyltransferase, catabolic, found in Pseudomonas aeruginosa (strain ATCC 15692 / DSM 22644 / CIP 104116 / JCM 14847 / LMG 12228 / 1C / PRS 101 / PAO1).